The primary structure comprises 483 residues: Glutamyl-tRNA(Gln) amidotransferase subunit A (483 aa).

Residues lysine 77 and serine 152 each act as charge relay system in the active site. Serine 176 (acyl-ester intermediate) is an active-site residue.

Belongs to the amidase family. GatA subfamily. In terms of assembly, heterotrimer of A, B and C subunits.

The catalysed reaction is L-glutamyl-tRNA(Gln) + L-glutamine + ATP + H2O = L-glutaminyl-tRNA(Gln) + L-glutamate + ADP + phosphate + H(+). Its function is as follows. Allows the formation of correctly charged Gln-tRNA(Gln) through the transamidation of misacylated Glu-tRNA(Gln) in organisms which lack glutaminyl-tRNA synthetase. The reaction takes place in the presence of glutamine and ATP through an activated gamma-phospho-Glu-tRNA(Gln). This is Glutamyl-tRNA(Gln) amidotransferase subunit A from Listeria monocytogenes serotype 4b (strain F2365).